The primary structure comprises 98 residues: Integration host factor subunit alpha (98 aa).

Residues 53–69 (DLREKNERPGRNPKTGE) are compositionally biased toward basic and acidic residues. The disordered stretch occupies residues 53 to 72 (DLREKNERPGRNPKTGEDIP).

This sequence belongs to the bacterial histone-like protein family. As to quaternary structure, heterodimer of an alpha and a beta chain.

In terms of biological role, this protein is one of the two subunits of integration host factor, a specific DNA-binding protein that functions in genetic recombination as well as in transcriptional and translational control. The chain is Integration host factor subunit alpha from Vibrio atlanticus (strain LGP32) (Vibrio splendidus (strain Mel32)).